A 199-amino-acid chain; its full sequence is uncharacterized protein (199 aa).

The disordered stretch occupies residues 1-41 (MKFKRDENQNSTHHRGNKNNTNNDDDDKEEEEEIINDTTMP). Residues 23-35 (NDDDDKEEEEEII) are compositionally biased toward acidic residues. Helical transmembrane passes span 73 to 93 (LILD…FAFW), 96 to 116 (ISTY…VSFL), and 166 to 186 (IAIA…SPYL).

Its subcellular location is the membrane. This is an uncharacterized protein from Dictyostelium discoideum (Social amoeba).